The following is a 216-amino-acid chain: 3-keto-L-gulonate-6-phosphate decarboxylase UlaD (216 aa).

Position 11 (Asp11) interacts with substrate. Residues Glu33 and Asp62 each coordinate Mg(2+). Arg192 is a substrate binding site.

Belongs to the HPS/KGPDC family. KGPDC subfamily. As to quaternary structure, homodimer. It depends on Mg(2+) as a cofactor.

The enzyme catalyses 3-dehydro-L-gulonate 6-phosphate + H(+) = L-xylulose 5-phosphate + CO2. It participates in cofactor degradation; L-ascorbate degradation; D-xylulose 5-phosphate from L-ascorbate: step 2/4. Catalyzes the decarboxylation of 3-keto-L-gulonate-6-P into L-xylulose-5-P. Is involved in the anaerobic L-ascorbate utilization. The sequence is that of 3-keto-L-gulonate-6-phosphate decarboxylase UlaD from Shigella dysenteriae serotype 1 (strain Sd197).